A 143-amino-acid chain; its full sequence is Ribonuclease P protein component 2 (143 aa).

Belongs to the eukaryotic/archaeal RNase P protein component 2 family. In terms of assembly, consists of a catalytic RNA component and at least 4-5 protein subunits.

The protein localises to the cytoplasm. It carries out the reaction Endonucleolytic cleavage of RNA, removing 5'-extranucleotides from tRNA precursor.. Its function is as follows. Part of ribonuclease P, a protein complex that generates mature tRNA molecules by cleaving their 5'-ends. The protein is Ribonuclease P protein component 2 of Saccharolobus islandicus (strain L.S.2.15 / Lassen #1) (Sulfolobus islandicus).